The primary structure comprises 285 residues: SLAM family member 9 (285 aa).

Residues Met1–Gly17 form the signal peptide. The Extracellular portion of the chain corresponds to Phe18–Leu232. In terms of domain architecture, Ig-like V-type spans Pro25–Arg126. Asn37, Asn97, Asn141, Asn149, Asn175, and Asn206 each carry an N-linked (GlcNAc...) asparagine glycan. The 80-residue stretch at Pro134–Ser213 folds into the Ig-like C2-type domain. Cys154 and Cys198 are disulfide-bonded. A helical transmembrane segment spans residues Leu233–Phe253. The Cytoplasmic portion of the chain corresponds to Arg254 to Val285.

Its subcellular location is the membrane. Functionally, may play a role in the immune response. This Mus musculus (Mouse) protein is SLAM family member 9 (Slamf9).